Consider the following 344-residue polypeptide: tRNA N6-adenosine threonylcarbamoyltransferase (344 aa).

Fe cation is bound by residues histidine 119 and histidine 123. Substrate contacts are provided by residues 141–145, aspartate 174, glycine 187, aspartate 191, and asparagine 280; that span reads VVSGG. Aspartate 310 is a binding site for Fe cation.

The protein belongs to the KAE1 / TsaD family. The cofactor is Fe(2+).

It is found in the cytoplasm. The catalysed reaction is L-threonylcarbamoyladenylate + adenosine(37) in tRNA = N(6)-L-threonylcarbamoyladenosine(37) in tRNA + AMP + H(+). Its function is as follows. Required for the formation of a threonylcarbamoyl group on adenosine at position 37 (t(6)A37) in tRNAs that read codons beginning with adenine. Is involved in the transfer of the threonylcarbamoyl moiety of threonylcarbamoyl-AMP (TC-AMP) to the N6 group of A37, together with TsaE and TsaB. TsaD likely plays a direct catalytic role in this reaction. The protein is tRNA N6-adenosine threonylcarbamoyltransferase of Listeria welshimeri serovar 6b (strain ATCC 35897 / DSM 20650 / CCUG 15529 / CIP 8149 / NCTC 11857 / SLCC 5334 / V8).